The following is a 290-amino-acid chain: Nucleoid occlusion protein (290 aa).

Positions 153-172 (EALAQRLGKGQSTVANKLRL) form a DNA-binding region, H-T-H motif.

The protein belongs to the ParB family.

It localises to the cytoplasm. The protein localises to the nucleoid. Functionally, effects nucleoid occlusion by binding relatively nonspecifically to DNA and preventing the assembly of the division machinery in the vicinity of the nucleoid, especially under conditions that disturb the cell cycle. It helps to coordinate cell division and chromosome segregation by preventing the formation of the Z ring through the nucleoid, which would cause chromosome breakage. The chain is Nucleoid occlusion protein from Bacillus mycoides (strain KBAB4) (Bacillus weihenstephanensis).